The primary structure comprises 118 residues: Large ribosomal subunit protein bL20 (118 aa).

This sequence belongs to the bacterial ribosomal protein bL20 family.

In terms of biological role, binds directly to 23S ribosomal RNA and is necessary for the in vitro assembly process of the 50S ribosomal subunit. It is not involved in the protein synthesizing functions of that subunit. This is Large ribosomal subunit protein bL20 from Staphylococcus haemolyticus (strain JCSC1435).